The chain runs to 265 residues: Small ribosomal subunit protein uS3 (265 aa).

The KH type-2 domain maps to 39–107 (VRDFLKKKLK…PVHVNIEEIR (69 aa)). The disordered stretch occupies residues 211 to 265 (NDAPVVEEPQDDRRRRPGRPEGRRREGEGRPGGNRRGGAGAGRRAAPGADAKSGE). Over residues 221-239 (DDRRRRPGRPEGRRREGEG) the composition is skewed to basic and acidic residues. Gly residues predominate over residues 240 to 251 (RPGGNRRGGAGA).

Belongs to the universal ribosomal protein uS3 family. Part of the 30S ribosomal subunit. Forms a tight complex with proteins S10 and S14.

In terms of biological role, binds the lower part of the 30S subunit head. Binds mRNA in the 70S ribosome, positioning it for translation. The polypeptide is Small ribosomal subunit protein uS3 (Cupriavidus necator (strain ATCC 17699 / DSM 428 / KCTC 22496 / NCIMB 10442 / H16 / Stanier 337) (Ralstonia eutropha)).